A 314-amino-acid polypeptide reads, in one-letter code: Aspartate carbamoyltransferase catalytic subunit (314 aa).

The carbamoyl phosphate site is built by Arg55 and Thr56. Lys83 lines the L-aspartate pocket. Residues Arg105, His139, and Gln142 each coordinate carbamoyl phosphate. L-aspartate is bound by residues Arg172 and Arg226. Carbamoyl phosphate is bound by residues Gly267 and Pro268.

It belongs to the aspartate/ornithine carbamoyltransferase superfamily. ATCase family. As to quaternary structure, heterododecamer (2C3:3R2) of six catalytic PyrB chains organized as two trimers (C3), and six regulatory PyrI chains organized as three dimers (R2).

It catalyses the reaction carbamoyl phosphate + L-aspartate = N-carbamoyl-L-aspartate + phosphate + H(+). The protein operates within pyrimidine metabolism; UMP biosynthesis via de novo pathway; (S)-dihydroorotate from bicarbonate: step 2/3. Functionally, catalyzes the condensation of carbamoyl phosphate and aspartate to form carbamoyl aspartate and inorganic phosphate, the committed step in the de novo pyrimidine nucleotide biosynthesis pathway. In Rhodococcus erythropolis (strain PR4 / NBRC 100887), this protein is Aspartate carbamoyltransferase catalytic subunit.